Consider the following 217-residue polypeptide: Large ribosomal subunit protein uL3 (217 aa).

Residues 127–162 form a disordered region; it reads GFSRGPMSHGSKNHRAPGSTGAGTTPGRIYPGKRMA. The span at 142–153 shows a compositional bias: low complexity; that stretch reads APGSTGAGTTPG.

This sequence belongs to the universal ribosomal protein uL3 family. In terms of assembly, part of the 50S ribosomal subunit. Forms a cluster with proteins L14 and L19.

Its function is as follows. One of the primary rRNA binding proteins, it binds directly near the 3'-end of the 23S rRNA, where it nucleates assembly of the 50S subunit. The protein is Large ribosomal subunit protein uL3 of Prochlorococcus marinus (strain MIT 9312).